The primary structure comprises 471 residues: Heat shock 70 kDa protein 13 (471 aa).

The signal sequence occupies residues 1-22 (MAGEMTILGSAVLTLLLAGYLA). N-linked (GlcNAc...) asparagine glycosylation occurs at N184. The interval 316 to 339 (NDSQKPQNADSKLPEDQLTPGDGH) is disordered.

Belongs to the heat shock protein 70 family. In terms of assembly, binds UBQLN2.

It is found in the microsome. It localises to the endoplasmic reticulum. In terms of biological role, has peptide-independent ATPase activity. This chain is Heat shock 70 kDa protein 13 (Hspa13), found in Rattus norvegicus (Rat).